A 391-amino-acid chain; its full sequence is S-adenosylmethionine synthase (391 aa).

Histidine 16 serves as a coordination point for ATP. Residue aspartate 18 coordinates Mg(2+). Glutamate 44 lines the K(+) pocket. L-methionine-binding residues include glutamate 57 and glutamine 101. Residues 101–111 (QSADIAQGVDA) form a flexible loop region. ATP contacts are provided by residues 166-168 (DAK), aspartate 244, 250-251 (RK), alanine 267, and lysine 271. Aspartate 244 contacts L-methionine. Lysine 275 is an L-methionine binding site.

Belongs to the AdoMet synthase family. Homotetramer; dimer of dimers. It depends on Mg(2+) as a cofactor. K(+) is required as a cofactor.

The protein resides in the cytoplasm. The catalysed reaction is L-methionine + ATP + H2O = S-adenosyl-L-methionine + phosphate + diphosphate. It functions in the pathway amino-acid biosynthesis; S-adenosyl-L-methionine biosynthesis; S-adenosyl-L-methionine from L-methionine: step 1/1. In terms of biological role, catalyzes the formation of S-adenosylmethionine (AdoMet) from methionine and ATP. The overall synthetic reaction is composed of two sequential steps, AdoMet formation and the subsequent tripolyphosphate hydrolysis which occurs prior to release of AdoMet from the enzyme. The sequence is that of S-adenosylmethionine synthase from Zymomonas mobilis subsp. mobilis (strain ATCC 31821 / ZM4 / CP4).